Here is a 147-residue protein sequence, read N- to C-terminus: Hemoglobin subunit beta (147 aa).

Residue Val2 is modified to N-acetylvaline. The Globin domain occupies 3–147; that stretch reads HLTGEEKAAV…VANALAHKYH (145 aa). A Phosphothreonine modification is found at Thr13. Ser45 bears the Phosphoserine mark. N6-acetyllysine is present on Lys60. His64 provides a ligand contact to heme b. An N6-acetyllysine modification is found at Lys83. A heme b-binding site is contributed by His93. At Cys94 the chain carries S-nitrosocysteine. Lys145 carries the post-translational modification N6-acetyllysine.

This sequence belongs to the globin family. As to quaternary structure, heterotetramer of two alpha chains and two beta chains. As to expression, red blood cells.

Its function is as follows. Involved in oxygen transport from the lung to the various peripheral tissues. The sequence is that of Hemoglobin subunit beta (HBB) from Ailuropoda melanoleuca (Giant panda).